A 529-amino-acid polypeptide reads, in one-letter code: Nuclear protein localization protein 4 homolog 1 (529 aa).

Positions 129 to 266 constitute an MPN domain; it reads IQIENQELVN…ITEYSMDRHY (138 aa). A RanBP2-type zinc finger spans residues 499–529; that stretch reads SGGAVWNCGHCTFQNEAARQDCSMCGLPAAD.

This sequence belongs to the NPL4 family. Forms a complex composed of ubxn-3, ufd-1, npl-4.1 and cdc-48.1; within the complex, interacts with ufd-1 and ubxn-3. Interacts with ufd-1. Interacts with elc-1/elongin C; the interaction may mediate the interaction between the npl-4-ufd-1-cdc-48 complex and the E3 ubiquitin ligase cul-2 complex.

It is found in the cytoplasm. The protein localises to the nucleus. Its function is as follows. In association with ufd-1 and ATPase cdc-48.1 and/or cdc-48.2, involved in the cytoplasmic elimination of misfolded proteins exported from the ER. This pathway, known as ERAD, prevents the activation of the unfolded protein response (UPR) caused by the accumulation of misfolded proteins in the ER. During S phase and in association with ufd-1, cdc-48.1 and/or cdc-48.2 and ubxn-3, ensures the degradation of DNA licensing factor cdt-1 after the initiation of DNA replication and thus the disassembly of the DNA replication CGM helicase complex by promoting the dissociation from chromatin of several of its components including cdc-45 and sld-5. Regulates ubxn-3 nuclear localization during S phase. The chain is Nuclear protein localization protein 4 homolog 1 from Caenorhabditis elegans.